Here is a 712-residue protein sequence, read N- to C-terminus: Golgin candidate 3 (712 aa).

The segment at 23–49 (DEEEDDLHKYGSANGVSNSDRRNSSGF) is disordered. A compositionally biased stretch (polar residues) spans 36–49 (NGVSNSDRRNSSGF). Positions 65-134 (AHHEIERYKA…LKEARTDISR (70 aa)) form a coiled coil. Residues 135 to 150 (GSNNYAIKGNNDQSPN) are compositionally biased toward polar residues. Disordered regions lie at residues 135-176 (GSNN…TDSF) and 306-347 (ESRK…MEQS). Coiled-coil stretches lie at residues 197-313 (QATE…LTNS), 340-558 (GKEE…LNRM), and 659-690 (LKDA…QEAA). The segment covering 328-344 (STLDKEKPESFPGKEEM) has biased composition (basic and acidic residues). The GRIP domain occupies 557 to 608 (RMSMESDYLVDRRIVIKLLVTYFQKNHNKEVLDLMVRMLGFSEEDKERIGAA). Residues 666-712 (ERREAEEAAASKAKQDSERTRQEAALHDSEFSTVPLRSSESNQRLSR) form a disordered region. Residues 678–695 (AKQDSERTRQEAALHDSE) show a composition bias toward basic and acidic residues. Over residues 696 to 712 (FSTVPLRSSESNQRLSR) the composition is skewed to polar residues.

As to quaternary structure, interacts with ARF1; preferentially with the active form of the protein.

It is found in the golgi apparatus. It localises to the endosome. Functionally, golgi matrix protein playing a role in tethering of vesicles to Golgi membranes and in maintaining the overall structure of the Golgi apparatus. The chain is Golgin candidate 3 (GC3) from Arabidopsis thaliana (Mouse-ear cress).